The chain runs to 558 residues: Suppressor of zyg-1 protein 20 (558 aa).

Residues 45–146 form the SUZ domain; that stretch reads KVKAEESSGV…ARNRILGTEY (102 aa). Disordered regions lie at residues 50–132, 205–241, and 374–558; these read ESSG…ERQA, FTQP…QQSL, and QRNQ…NRPQ. Residues 69 to 81 are compositionally biased toward basic and acidic residues; sequence EEPKRVFLRRPKD. Residues 94-109 show a composition bias toward polar residues; that stretch reads PPTSADTEEQPVTNVR. Over residues 117-131 the composition is skewed to basic and acidic residues; that stretch reads NQKEKQPAPTYEERQ. Low complexity-rich tracts occupy residues 374–394 and 424–477; these read QRNQ…QNRQ and NNGQ…QQQQ. Polar residues-rich tracts occupy residues 478 to 508 and 545 to 558; these read NKSG…SQNP and SASQ…NRPQ.

In terms of assembly, interacts (via C-terminus) with atx-2 (via C-terminus); the interaction is RNA independent. Interacts with let-92. In terms of processing, phosphorylated. May be dephosphorylated by let-92.

It localises to the cytoplasm. Its subcellular location is the cytoskeleton. It is found in the microtubule organizing center. The protein localises to the centrosome. The protein resides in the centriole. It localises to the nucleus. Its subcellular location is the nucleolus. It is found in the chromosome. In terms of biological role, RNA binding protein that is required for normal cell division and cytokinesis during embryonic development. Functions with RNA-binding protein atx-2 to ensure embryonic cell division, and to this end, plays a role in the regulation of centrosome assembly, position and size, and in astral microtubule outgrowth and nucleation. Furthermore, negatively regulates the levels of the protein kinase zyg-1 at the centrosome. Also involved in ensuring centrosome attachment to the nuclear envelope. The sequence is that of Suppressor of zyg-1 protein 20 from Caenorhabditis elegans.